The chain runs to 875 residues: Protein SEY1 (875 aa).

The Cytoplasmic portion of the chain corresponds to 1 to 749 (MVANGHFASN…KRSAIGGITQ (749 aa)). One can recognise a GB1/RHD3-type G domain in the interval 49–307 (GFNYHLISVF…IPADGFAVYA (259 aa)). 59-66 (GSQSTGKS) contributes to the GTP binding site. A coiled-coil region spans residues 482 to 506 (SNYQQELSLYQKDLERISGQLRRDE). The interval 676–704 (LDKWIGHTPSSATPADEEDLTPIGGVDED) is disordered. A compositionally biased stretch (acidic residues) spans 690–704 (ADEEDLTPIGGVDED). Residues 750–770 (VPLYFYGLLLALGWNEIMAVL) form a helical membrane-spanning segment. Residues 771–773 (RNP) are Lumenal-facing. A helical membrane pass occupies residues 774–794 (AYFFLLFVCAIGAYVTYQLNL). Residues 795-875 (WGPIIKMTEA…ADDDDVDDDF (81 aa)) are Cytoplasmic-facing. The disordered stretch occupies residues 831–875 (MAMSGARNATEEHEMSNLNRKSGERGGQKYRGEDVADDDDVDDDF). A compositionally biased stretch (basic and acidic residues) spans 839-864 (ATEEHEMSNLNRKSGERGGQKYRGED). Residues 865 to 875 (VADDDDVDDDF) show a composition bias toward acidic residues.

It belongs to the TRAFAC class dynamin-like GTPase superfamily. GB1/RHD3 GTPase family. RHD3 subfamily.

The protein localises to the endoplasmic reticulum membrane. Cooperates with the reticulon proteins and tubule-shaping DP1 family proteins to generate and maintain the structure of the tubular endoplasmic reticulum network. Has GTPase activity, which is required for its function in ER organization. The chain is Protein SEY1 from Ajellomyces dermatitidis (strain ER-3 / ATCC MYA-2586) (Blastomyces dermatitidis).